A 212-amino-acid polypeptide reads, in one-letter code: MNSQQCVIIAIAGASASGKSLIAKTIFDELRRDLGTDQIGVINEDAYYRDQSHLSMDERVLTNYDHPKALDHQLLCTHLQLLKSGEAVDIPCYSYTEHTRTAETLTMTPKKVIILEGILLLTDPKLRALMDASVFMDTPLDICFLRRLTRDVAERGRTMESVISQYKKTVRPMFLQFIEPSKQYADIIVPRGGKNRIATDILKTRIQHLLAK.

An ATP-binding site is contributed by 13-20 (GASASGKS).

The protein belongs to the uridine kinase family.

It localises to the cytoplasm. It catalyses the reaction uridine + ATP = UMP + ADP + H(+). The catalysed reaction is cytidine + ATP = CMP + ADP + H(+). Its pathway is pyrimidine metabolism; CTP biosynthesis via salvage pathway; CTP from cytidine: step 1/3. It functions in the pathway pyrimidine metabolism; UMP biosynthesis via salvage pathway; UMP from uridine: step 1/1. In Shewanella baltica (strain OS155 / ATCC BAA-1091), this protein is Uridine kinase.